The sequence spans 167 residues: Bacterial non-heme ferritin-like protein (167 aa).

The 145-residue stretch at 1–145 (MATAGMLLKL…TILDEVRSAK (145 aa)) folds into the Ferritin-like diiron domain.

Belongs to the ferritin family. Prokaryotic subfamily.

Its subcellular location is the cytoplasm. This chain is Bacterial non-heme ferritin-like protein (ftnB), found in Escherichia coli O157:H7.